A 223-amino-acid polypeptide reads, in one-letter code: Ribosomal RNA small subunit methyltransferase G (223 aa).

Residues Gly83, Leu88, 134 to 135 (AE), and Arg152 each bind S-adenosyl-L-methionine.

The protein belongs to the methyltransferase superfamily. RNA methyltransferase RsmG family.

Its subcellular location is the cytoplasm. In terms of biological role, specifically methylates the N7 position of guanine in position 518 of 16S rRNA. In Corynebacterium diphtheriae (strain ATCC 700971 / NCTC 13129 / Biotype gravis), this protein is Ribosomal RNA small subunit methyltransferase G.